Consider the following 206-residue polypeptide: MFLIVGLGNPGEKYLNNRHNVGFQCVAEFARRHHLSFDGKRSDARIAEGLVNGQRVALARPQTFMNDSGKSVVGLVNWYKIDPASELLVVYDDLDLPFGTIKLRNQGSSGGQRGMNSIIQLLGTQKFARLRFGIGRPPEGWEVINFVLGNWNAAERETLPKLYDRAVEACELCLSDGVTKAMNAVNGEAPKKSKDQAKEPANEQPR.

TRNA is bound at residue Y14. H19 serves as the catalytic Proton acceptor. 2 residues coordinate tRNA: F64 and N66. Positions 185-206 (VNGEAPKKSKDQAKEPANEQPR) are disordered. Positions 189-206 (APKKSKDQAKEPANEQPR) are enriched in basic and acidic residues.

It belongs to the PTH family. As to quaternary structure, monomer.

Its subcellular location is the cytoplasm. It carries out the reaction an N-acyl-L-alpha-aminoacyl-tRNA + H2O = an N-acyl-L-amino acid + a tRNA + H(+). Functionally, hydrolyzes ribosome-free peptidyl-tRNAs (with 1 or more amino acids incorporated), which drop off the ribosome during protein synthesis, or as a result of ribosome stalling. Its function is as follows. Catalyzes the release of premature peptidyl moieties from peptidyl-tRNA molecules trapped in stalled 50S ribosomal subunits, and thus maintains levels of free tRNAs and 50S ribosomes. In Herpetosiphon aurantiacus (strain ATCC 23779 / DSM 785 / 114-95), this protein is Peptidyl-tRNA hydrolase.